The primary structure comprises 195 residues: Ribosomal RNA small subunit methyltransferase G (195 aa).

S-adenosyl-L-methionine contacts are provided by residues glycine 60, leucine 65, 114 to 115, and arginine 128; that span reads IE.

This sequence belongs to the methyltransferase superfamily. RNA methyltransferase RsmG family.

Its subcellular location is the cytoplasm. It carries out the reaction guanosine(527) in 16S rRNA + S-adenosyl-L-methionine = N(7)-methylguanosine(527) in 16S rRNA + S-adenosyl-L-homocysteine. In terms of biological role, specifically methylates the N7 position of guanine in position 527 of 16S rRNA. The polypeptide is Ribosomal RNA small subunit methyltransferase G (Dinoroseobacter shibae (strain DSM 16493 / NCIMB 14021 / DFL 12)).